A 218-amino-acid chain; its full sequence is Small ribosomal subunit protein uS3c (218 aa).

In terms of domain architecture, KH type-2 spans valine 47–serine 118.

This sequence belongs to the universal ribosomal protein uS3 family. In terms of assembly, part of the 30S ribosomal subunit.

Its subcellular location is the plastid. The protein resides in the chloroplast. The sequence is that of Small ribosomal subunit protein uS3c (rps3) from Barbarea verna (Land cress).